The sequence spans 227 residues: Cytochrome c oxidase subunit 2 (227 aa).

Over 1 to 14 (MAYPLQMGLQDATS) the chain is Mitochondrial intermembrane. Residues 15 to 45 (PIMEELLHFHDHTLMIVFLISSLVLYIISLM) form a helical membrane-spanning segment. Residues 46–59 (LTTKLTHTSTMDAQ) are Mitochondrial matrix-facing. Residues 60 to 87 (EVETVWTILPAIILILIALPSLRILYMM) traverse the membrane as a helical segment. Residues 88–227 (DEINNPSLTV…HFEKWSTSML (140 aa)) lie on the Mitochondrial intermembrane side of the membrane. 6 residues coordinate Cu cation: H161, C196, E198, C200, H204, and M207. E198 serves as a coordination point for Mg(2+).

The protein belongs to the cytochrome c oxidase subunit 2 family. As to quaternary structure, component of the cytochrome c oxidase (complex IV, CIV), a multisubunit enzyme composed of 14 subunits. The complex is composed of a catalytic core of 3 subunits MT-CO1, MT-CO2 and MT-CO3, encoded in the mitochondrial DNA, and 11 supernumerary subunits COX4I, COX5A, COX5B, COX6A, COX6B, COX6C, COX7A, COX7B, COX7C, COX8 and NDUFA4, which are encoded in the nuclear genome. The complex exists as a monomer or a dimer and forms supercomplexes (SCs) in the inner mitochondrial membrane with NADH-ubiquinone oxidoreductase (complex I, CI) and ubiquinol-cytochrome c oxidoreductase (cytochrome b-c1 complex, complex III, CIII), resulting in different assemblies (supercomplex SCI(1)III(2)IV(1) and megacomplex MCI(2)III(2)IV(2)). Found in a complex with TMEM177, COA6, COX18, COX20, SCO1 and SCO2. Interacts with TMEM177 in a COX20-dependent manner. Interacts with COX20. Interacts with COX16. Cu cation is required as a cofactor.

The protein localises to the mitochondrion inner membrane. The catalysed reaction is 4 Fe(II)-[cytochrome c] + O2 + 8 H(+)(in) = 4 Fe(III)-[cytochrome c] + 2 H2O + 4 H(+)(out). Component of the cytochrome c oxidase, the last enzyme in the mitochondrial electron transport chain which drives oxidative phosphorylation. The respiratory chain contains 3 multisubunit complexes succinate dehydrogenase (complex II, CII), ubiquinol-cytochrome c oxidoreductase (cytochrome b-c1 complex, complex III, CIII) and cytochrome c oxidase (complex IV, CIV), that cooperate to transfer electrons derived from NADH and succinate to molecular oxygen, creating an electrochemical gradient over the inner membrane that drives transmembrane transport and the ATP synthase. Cytochrome c oxidase is the component of the respiratory chain that catalyzes the reduction of oxygen to water. Electrons originating from reduced cytochrome c in the intermembrane space (IMS) are transferred via the dinuclear copper A center (CU(A)) of subunit 2 and heme A of subunit 1 to the active site in subunit 1, a binuclear center (BNC) formed by heme A3 and copper B (CU(B)). The BNC reduces molecular oxygen to 2 water molecules using 4 electrons from cytochrome c in the IMS and 4 protons from the mitochondrial matrix. The polypeptide is Cytochrome c oxidase subunit 2 (MT-CO2) (Phoca vitulina (Harbor seal)).